The primary structure comprises 416 residues: TNF receptor-associated factor 1 (416 aa).

Residues 1–24 are disordered; that stretch reads MASSSGSSPRPAPDENEFPFGCPP. Ser-146 carries the post-translational modification Phosphoserine. Residues 182–264 adopt a coiled-coil conformation; it reads MKEKLLAELE…QSLRLMEEAS (83 aa). Glycyl lysine isopeptide (Lys-Gly) (interchain with G-Cter in ubiquitin) cross-links involve residues Lys-185 and Lys-193. The MATH domain occupies 266-412; that stretch reads DGTFLWKITN…DDTMFLKCIV (147 aa).

As to quaternary structure, homotrimer. Heterotrimer with TRAF2. Interacts with TNFRSF1A/TNFR1, TNFRSF1B/TNFR2, TNFRSF4, TNFRSF5/CD40, TNFRSF8/CD30, TNFRSF9/CD137, TNFRSF11A/RANK, TNFRSF13C, TNFRSF18/AITR, TNFRSF17/BCMA, TNFRSF19/TROY, TNFRSF19L/RELT, XEDAR, EDAR, Epstein-Barr virus BNFL1/LMP-1, TANK/ITRAF, TRAIP and RIPK2. Interacts with BIRC2 and BIRC3 N-terminus; a single BIRC2 or BIRC3 molecule interacts with a heterotrimer formed by TRAF1 and TRAF2. Interacts with NFATC2IP, TRAFD1 and with HIVEP3. Interacts with MAP3K14. Interacts with GPS2. Post-translationally, polyubiquitinated by BIRC2 and/or BIRC3, leading to its subsequent proteasomal degradation. Ubiquitinated by the SCF(FBXL2) complex, leading to its degradation by the proteasome.

Adapter molecule that regulates the activation of NF-kappa-B and JNK. Plays a role in the regulation of cell survival and apoptosis. The heterotrimer formed by TRAF1 and TRAF2 is part of a E3 ubiquitin-protein ligase complex that promotes ubiquitination of target proteins, such as MAP3K14. The TRAF1/TRAF2 complex recruits the antiapoptotic E3 protein-ubiquitin ligases BIRC2 and BIRC3 to TNFRSF1B/TNFR2. This chain is TNF receptor-associated factor 1 (TRAF1), found in Homo sapiens (Human).